The sequence spans 477 residues: Bifunctional protein HldE (477 aa).

Residues 1 to 318 (MKVTLPEFER…ENAVRGRAET (318 aa)) form a ribokinase region. Position 195-198 (195-198 (NLSE)) interacts with ATP. Residue D264 is part of the active site. The interval 344–477 (MTNGVFDILH…IKKIQKDSDK (134 aa)) is cytidylyltransferase.

It in the N-terminal section; belongs to the carbohydrate kinase PfkB family. The protein in the C-terminal section; belongs to the cytidylyltransferase family. Homodimer.

It carries out the reaction D-glycero-beta-D-manno-heptose 7-phosphate + ATP = D-glycero-beta-D-manno-heptose 1,7-bisphosphate + ADP + H(+). The catalysed reaction is D-glycero-beta-D-manno-heptose 1-phosphate + ATP + H(+) = ADP-D-glycero-beta-D-manno-heptose + diphosphate. It functions in the pathway nucleotide-sugar biosynthesis; ADP-L-glycero-beta-D-manno-heptose biosynthesis; ADP-L-glycero-beta-D-manno-heptose from D-glycero-beta-D-manno-heptose 7-phosphate: step 1/4. Its pathway is nucleotide-sugar biosynthesis; ADP-L-glycero-beta-D-manno-heptose biosynthesis; ADP-L-glycero-beta-D-manno-heptose from D-glycero-beta-D-manno-heptose 7-phosphate: step 3/4. Functionally, catalyzes the phosphorylation of D-glycero-D-manno-heptose 7-phosphate at the C-1 position to selectively form D-glycero-beta-D-manno-heptose-1,7-bisphosphate. Catalyzes the ADP transfer from ATP to D-glycero-beta-D-manno-heptose 1-phosphate, yielding ADP-D-glycero-beta-D-manno-heptose. This Klebsiella pneumoniae (strain 342) protein is Bifunctional protein HldE.